A 326-amino-acid chain; its full sequence is Glyoxalase I (326 aa).

VOC domains follow at residues 22 to 167 (LLNH…LITY) and 182 to 322 (KFNH…VVPH). Zn(2+) is bound at residue H25. A substrate-binding site is contributed by R29. E89 serves as a coordination point for Zn(2+). Residues N93, R113, H117, and 147 to 148 (RQ) contribute to the substrate site. Zn(2+) is bound at residue H117. E163 provides a ligand contact to Zn(2+). Catalysis depends on proton donor/acceptor residues E163 and E318.

Belongs to the glyoxalase I family. Monomer. The cofactor is Zn(2+).

It carries out the reaction (R)-S-lactoylglutathione = methylglyoxal + glutathione. The protein operates within secondary metabolite metabolism; methylglyoxal degradation; (R)-lactate from methylglyoxal: step 1/2. Catalyzes the conversion of hemimercaptal, formed from methylglyoxal and glutathione, to S-lactoylglutathione. Can use gamma-glutamylcysteine as a substrate. The polypeptide is Glyoxalase I (Saccharomyces cerevisiae (strain ATCC 204508 / S288c) (Baker's yeast)).